Here is a 509-residue protein sequence, read N- to C-terminus: Putative ATP-dependent RNA helicase QP509L (509 aa).

A Helicase ATP-binding domain is found at 110 to 262 (KKLLSPYGRF…KIILHHLGQP (153 aa)). 123–130 (LNTGLGKT) lines the ATP pocket. The short motif at 215-218 (DEAH) is the DEAH box element.

The protein belongs to the DEAD box helicase family. DEAH subfamily.

It catalyses the reaction ATP + H2O = ADP + phosphate + H(+). This Ornithodoros (relapsing fever ticks) protein is Putative ATP-dependent RNA helicase QP509L.